A 120-amino-acid chain; its full sequence is Accessory gland protein Acp53Ea (120 aa).

Positions 1–23 (MKLIKVTLVFSLLALVFVAQTEA) are cleaved as a signal peptide.

As to expression, main cells of accessory gland and seminal fluid.

It localises to the secreted. Its function is as follows. Responsible for physiological and behavioral changes in mated female flies. The protein is Accessory gland protein Acp53Ea (Acp53Ea) of Drosophila melanogaster (Fruit fly).